Here is a 168-residue protein sequence, read N- to C-terminus: uncharacterized protein (168 aa).

2 consecutive CBS domains span residues 20–77 and 117–168; these read IMKK…NEDL and MTRK…EALI.

This is an uncharacterized protein from Methanocaldococcus jannaschii (strain ATCC 43067 / DSM 2661 / JAL-1 / JCM 10045 / NBRC 100440) (Methanococcus jannaschii).